We begin with the raw amino-acid sequence, 309 residues long: THO complex subunit Tho3 (309 aa).

WD repeat units follow at residues 22–61 (GQQGPIRSLGWNLSGSRLASSSSSGSVLVWNSDRLDFKFT), 65–107 (GNRG…PIAE), 109–148 (ESNYENIYATWSPSGNYCCASSRDDMLSFIDARERRIMET), 192–231 (AHNSNCFCIEFSPDNRHLAIGGADAITSLWDPQELICERS), 234–273 (RMDYPIRTLSFSYDSRYLASGSEDRYVDIADTKTGDQIWK), and 275–309 (PTNGPLNKVAWHPTKHILAYAVSEPNSSGLKIFGL).

This sequence belongs to the THOC3 family. Component of the transcription/export (TREX) complex, which is at least is formed of SUB2, TEX1 and YRA1 and the THO complex composed of HPR1, MFT1, THO2 and THP1.

It is found in the nucleus. Its function is as follows. Component of the TREX complex, which operates in coupling transcription elongation to mRNA export. This chain is THO complex subunit Tho3 (THO3), found in Schizosaccharomyces pombe (strain 972 / ATCC 24843) (Fission yeast).